The sequence spans 50 residues: Putative protein HokF (50 aa).

The helical transmembrane segment at 5-25 threads the bilayer; that stretch reads YALVAVIVLCLTVPGFTLLVG.

This sequence belongs to the Hok/Gef family.

It is found in the cell inner membrane. Its function is as follows. Toxic component of a type I toxin-antitoxin (TA) system. When overexpressed kills cells within minutes; causes collapse of the transmembrane potential and arrest of respiration. Its toxic effect is probably neutralized by an antisense antitoxin Sok RNA. The polypeptide is Putative protein HokF (hokF) (Escherichia coli O157:H7).